A 738-amino-acid chain; its full sequence is NAD(P)H-quinone oxidoreductase subunit 5, chloroplastic (738 aa).

Helical transmembrane passes span 9–29 (WVIP…LFLI), 39–59 (IWAF…LHLS), 89–109 (VDPL…LVLI), 125–145 (FVYI…SNLI), 147–167 (IYFF…FWFT), 185–205 (GDFG…SLEF), 219–239 (NGIN…GAVA), 258–278 (TPIS…FLLA), 280–300 (LLPL…VGTI), 327–347 (LGYM…FHLI), 354–374 (ALLF…VGYS), 396–416 (TTFL…CFWS), 425–445 (WLYS…TAFY), 542–562 (LFPL…GIPF), 610–630 (SLAI…YSFF), 691–711 (GVID…GEEI), and 717–737 (GRIS…LFFI).

It belongs to the complex I subunit 5 family. In terms of assembly, NDH is composed of at least 16 different subunits, 5 of which are encoded in the nucleus.

It is found in the plastid. The protein resides in the chloroplast thylakoid membrane. The catalysed reaction is a plastoquinone + NADH + (n+1) H(+)(in) = a plastoquinol + NAD(+) + n H(+)(out). The enzyme catalyses a plastoquinone + NADPH + (n+1) H(+)(in) = a plastoquinol + NADP(+) + n H(+)(out). In terms of biological role, NDH shuttles electrons from NAD(P)H:plastoquinone, via FMN and iron-sulfur (Fe-S) centers, to quinones in the photosynthetic chain and possibly in a chloroplast respiratory chain. The immediate electron acceptor for the enzyme in this species is believed to be plastoquinone. Couples the redox reaction to proton translocation, and thus conserves the redox energy in a proton gradient. The polypeptide is NAD(P)H-quinone oxidoreductase subunit 5, chloroplastic (ndhF) (Sorghum bicolor (Sorghum)).